A 173-amino-acid polypeptide reads, in one-letter code: Cytochrome b6-f complex subunit 4, chloroplastic (173 aa).

The N-terminal 14 residues, 1-14 (ESALERRSSSVVMN), are a transit peptide targeting the chloroplast. Helical transmembrane passes span 49-69 (LLYM…GLAV), 108-128 (LLGV…PFIE), and 144-164 (SVFL…TLPI).

This sequence belongs to the cytochrome b family. PetD subfamily. In terms of assembly, the 4 large subunits of the cytochrome b6-f complex are cytochrome b6, subunit IV (17 kDa polypeptide, petD), cytochrome f and the Rieske protein, while the 4 small subunits are petG, petL, petM and petN. The complex functions as a dimer.

The protein localises to the plastid. Its subcellular location is the chloroplast thylakoid membrane. In terms of biological role, component of the cytochrome b6-f complex, which mediates electron transfer between photosystem II (PSII) and photosystem I (PSI), cyclic electron flow around PSI, and state transitions. This chain is Cytochrome b6-f complex subunit 4, chloroplastic, found in Euglena gracilis.